A 422-amino-acid polypeptide reads, in one-letter code: Serine--tRNA ligase (422 aa).

231 to 233 (TSE) contacts L-serine. 262 to 264 (RQE) provides a ligand contact to ATP. Residue E285 participates in L-serine binding. 349–352 (EISS) contacts ATP. Residue S384 coordinates L-serine.

This sequence belongs to the class-II aminoacyl-tRNA synthetase family. Type-1 seryl-tRNA synthetase subfamily. In terms of assembly, homodimer. The tRNA molecule binds across the dimer.

It localises to the cytoplasm. The enzyme catalyses tRNA(Ser) + L-serine + ATP = L-seryl-tRNA(Ser) + AMP + diphosphate + H(+). It carries out the reaction tRNA(Sec) + L-serine + ATP = L-seryl-tRNA(Sec) + AMP + diphosphate + H(+). It participates in aminoacyl-tRNA biosynthesis; selenocysteinyl-tRNA(Sec) biosynthesis; L-seryl-tRNA(Sec) from L-serine and tRNA(Sec): step 1/1. Catalyzes the attachment of serine to tRNA(Ser). Is also able to aminoacylate tRNA(Sec) with serine, to form the misacylated tRNA L-seryl-tRNA(Sec), which will be further converted into selenocysteinyl-tRNA(Sec). This Mycoplasma capricolum subsp. capricolum (strain California kid / ATCC 27343 / NCTC 10154) protein is Serine--tRNA ligase.